Here is a 594-residue protein sequence, read N- to C-terminus: UV-stimulated scaffold protein A homolog (594 aa).

The interval 24–170 (RKNLNRFIRE…VTLKKTKFVD (147 aa)) is VHS-like. Residues 170-198 (DYENGAKKIEAERKRKKILEERKMKMIEN) are a coiled coil. The UVSSA-type zinc finger occupies 466 to 493 (RKVCLAKMKSGKLCPRKDYYTCPLHGKI). Positions 469, 479, 487, and 490 each coordinate Zn(2+). Residues 503–540 (INEEDRLEENYRKEQNHLKEADKIRQMIEKEYESKTKR) are a coiled coil. A disordered region spans residues 533–558 (EYESKTKRRKKHDVDTTASEDVRNRL). The span at 544 to 558 (HDVDTTASEDVRNRL) shows a compositional bias: basic and acidic residues.

This sequence belongs to the UVSSA family.

It localises to the chromosome. Factor involved in transcription-coupled nucleotide excision repair (TC-NER) in response to UV damage. TC-NER allows RNA polymerase II-blocking lesions to be rapidly removed from the transcribed strand of active genes. The polypeptide is UV-stimulated scaffold protein A homolog (Caenorhabditis elegans).